The sequence spans 324 residues: tRNA pseudouridine synthase B (324 aa).

His43 serves as a coordination point for substrate. Asp48 acts as the Nucleophile in catalysis. The substrate site is built by Tyr76, Tyr179, and Leu200.

This sequence belongs to the pseudouridine synthase TruB family. Type 1 subfamily.

The enzyme catalyses uridine(55) in tRNA = pseudouridine(55) in tRNA. Functionally, responsible for synthesis of pseudouridine from uracil-55 in the psi GC loop of transfer RNAs. This is tRNA pseudouridine synthase B from Yersinia pestis bv. Antiqua (strain Nepal516).